Reading from the N-terminus, the 101-residue chain is Integration host factor subunit alpha (101 aa).

Positions 49–70 (FGNFQLRDKPQRPGRNPKTGEE) are disordered.

This sequence belongs to the bacterial histone-like protein family. As to quaternary structure, heterodimer of an alpha and a beta chain.

Its function is as follows. This protein is one of the two subunits of integration host factor, a specific DNA-binding protein that functions in genetic recombination as well as in transcriptional and translational control. This chain is Integration host factor subunit alpha, found in Nitrosospira multiformis (strain ATCC 25196 / NCIMB 11849 / C 71).